Here is a 295-residue protein sequence, read N- to C-terminus: Protease Rv3090 (295 aa).

2 consecutive transmembrane segments (helical) span residues T2 to W22 and V37 to V57.

Its subcellular location is the cell membrane. It localises to the secreted. It is found in the cell wall. Functionally, protease that triggers late cell apoptosis and contributes to the pathogenicity and dissemination of M.tuberculosis. In a mouse model of infection, can induce hepatocyte and lung cell apoptosis and cause pathological damage to the spleen, liver and lungs. Specifically stimulates the secretion of inflammatory cytokines including TNF-alpha, IL-6 and IL-1 beta. Can degrade casein in vitro. This Mycobacterium tuberculosis (strain ATCC 25618 / H37Rv) protein is Protease Rv3090.